The following is a 133-amino-acid chain: Putative pre-16S rRNA nuclease (133 aa).

It belongs to the YqgF nuclease family.

Its subcellular location is the cytoplasm. Its function is as follows. Could be a nuclease involved in processing of the 5'-end of pre-16S rRNA. The chain is Putative pre-16S rRNA nuclease from Bordetella bronchiseptica (strain ATCC BAA-588 / NCTC 13252 / RB50) (Alcaligenes bronchisepticus).